The chain runs to 632 residues: MAU2 chromatid cohesion factor homolog (632 aa).

2 TPR repeats span residues 453 to 486 (GGFY…ANAE) and 493 to 526 (SCSL…ASKI).

It belongs to the SCC4/mau-2 family. In terms of assembly, interacts with Nipped-B to form the cohesin loading complex.

The protein resides in the nucleus. Its subcellular location is the nucleoplasm. Its function is as follows. Required for association of the cohesin complex with chromatin during interphase. Plays a role in sister chromatid cohesion and normal progression through prometaphase. The protein is MAU2 chromatid cohesion factor homolog of Drosophila yakuba (Fruit fly).